The primary structure comprises 1072 residues: Carbamoyl phosphate synthase large chain (1072 aa).

The carboxyphosphate synthetic domain stretch occupies residues 1 to 401 (MPKYKDINKV…SLLKAVRSLE (401 aa)). Arginine 129, arginine 169, glycine 175, glycine 176, lysine 208, leucine 210, glutamate 215, glycine 241, valine 242, histidine 243, glutamine 284, and glutamate 298 together coordinate ATP. The ATP-grasp 1 domain maps to 133 to 327 (KRKMQEIGEP…IAKIAAKIAI (195 aa)). Residues glutamine 284, glutamate 298, and asparagine 300 each contribute to the Mg(2+) site. Residues glutamine 284, glutamate 298, and asparagine 300 each coordinate Mn(2+). Residues 402 to 544 (IKAYGLRLNN…YIYSTYGEED (143 aa)) are oligomerization domain. Residues 545–929 (EVEIHDMPKV…ALYKALEGAG (385 aa)) form a carbamoyl phosphate synthetic domain region. In terms of domain architecture, ATP-grasp 2 spans 671–861 (SKLLRELNIN…MVKLAVEVAL (191 aa)). Positions 707, 746, 748, 752, 777, 778, 779, 780, 820, and 832 each coordinate ATP. Mg(2+) is bound by residues glutamine 820, glutamate 832, and asparagine 834. Mn(2+) is bound by residues glutamine 820, glutamate 832, and asparagine 834. The MGS-like domain occupies 930 to 1072 (LKIPKKGKIL…QKDNVKNLVL (143 aa)). Residues 930–1072 (LKIPKKGKIL…QKDNVKNLVL (143 aa)) form an allosteric domain region.

The protein belongs to the CarB family. In terms of assembly, composed of two chains; the small (or glutamine) chain promotes the hydrolysis of glutamine to ammonia, which is used by the large (or ammonia) chain to synthesize carbamoyl phosphate. Tetramer of heterodimers (alpha,beta)4. Mg(2+) serves as cofactor. Requires Mn(2+) as cofactor.

The catalysed reaction is hydrogencarbonate + L-glutamine + 2 ATP + H2O = carbamoyl phosphate + L-glutamate + 2 ADP + phosphate + 2 H(+). It carries out the reaction hydrogencarbonate + NH4(+) + 2 ATP = carbamoyl phosphate + 2 ADP + phosphate + 2 H(+). It functions in the pathway amino-acid biosynthesis; L-arginine biosynthesis; carbamoyl phosphate from bicarbonate: step 1/1. It participates in pyrimidine metabolism; UMP biosynthesis via de novo pathway; (S)-dihydroorotate from bicarbonate: step 1/3. Functionally, large subunit of the glutamine-dependent carbamoyl phosphate synthetase (CPSase). CPSase catalyzes the formation of carbamoyl phosphate from the ammonia moiety of glutamine, carbonate, and phosphate donated by ATP, constituting the first step of 2 biosynthetic pathways, one leading to arginine and/or urea and the other to pyrimidine nucleotides. The large subunit (synthetase) binds the substrates ammonia (free or transferred from glutamine from the small subunit), hydrogencarbonate and ATP and carries out an ATP-coupled ligase reaction, activating hydrogencarbonate by forming carboxy phosphate which reacts with ammonia to form carbamoyl phosphate. The polypeptide is Carbamoyl phosphate synthase large chain (Thermoanaerobacter pseudethanolicus (strain ATCC 33223 / 39E) (Clostridium thermohydrosulfuricum)).